Reading from the N-terminus, the 652-residue chain is DNA ligase (652 aa).

Residues 29 to 33 (DSDYD), 78 to 79 (SL), and glutamate 107 each bind NAD(+). The active-site N6-AMP-lysine intermediate is lysine 109. The NAD(+) site is built by arginine 130, glutamate 164, lysine 278, and lysine 302. 4 residues coordinate Zn(2+): cysteine 395, cysteine 398, cysteine 413, and cysteine 418. One can recognise a BRCT domain in the interval 577 to 652 (NSDAALFGLT…IEDEDWLRQL (76 aa)).

This sequence belongs to the NAD-dependent DNA ligase family. LigA subfamily. Mg(2+) serves as cofactor. It depends on Mn(2+) as a cofactor.

It catalyses the reaction NAD(+) + (deoxyribonucleotide)n-3'-hydroxyl + 5'-phospho-(deoxyribonucleotide)m = (deoxyribonucleotide)n+m + AMP + beta-nicotinamide D-nucleotide.. Its function is as follows. DNA ligase that catalyzes the formation of phosphodiester linkages between 5'-phosphoryl and 3'-hydroxyl groups in double-stranded DNA using NAD as a coenzyme and as the energy source for the reaction. It is essential for DNA replication and repair of damaged DNA. This is DNA ligase from Streptococcus pyogenes serotype M49 (strain NZ131).